The sequence spans 101 residues: Putative metal transport protein HQ_3622A (101 aa).

The first 32 residues, Met-1–Thr-32, serve as a signal peptide directing secretion. A helical transmembrane segment spans residues Ile-75–Ala-95.

It localises to the cell membrane. Its function is as follows. May be involved in metal transport. This Haloquadratum walsbyi (strain DSM 16790 / HBSQ001) protein is Putative metal transport protein HQ_3622A.